Reading from the N-terminus, the 249-residue chain is MKIEANDVHVYYGLDHTLKGVSLSVKKNTVTALIGPSGCGKSTFLRCMNRMNDLIDNCQVKGNILIDGVDINSPSVNTNELRKAVGMVFQKPNPFPKSIFENVAYGLRVNGVSNKEYINDKVEWSLKQAALWDEVKDKLKKSALALSGGQQQRLCIARALAVEPSILLMDEPASALDPISTSKIEELIYNLKASYTIMIVTHNMQQASRTSDKTAFFYMGELVEYDDTRTLFTNPKKKRTQNYITGRFG.

Positions 3-244 (IEANDVHVYY…PKKKRTQNYI (242 aa)) constitute an ABC transporter domain. ATP is bound at residue 35–42 (GPSGCGKS).

It belongs to the ABC transporter superfamily. Phosphate importer (TC 3.A.1.7) family. The complex is composed of two ATP-binding proteins (PstB), two transmembrane proteins (PstC and PstA) and a solute-binding protein (PstS).

The protein resides in the cell inner membrane. The catalysed reaction is phosphate(out) + ATP + H2O = ADP + 2 phosphate(in) + H(+). Part of the ABC transporter complex PstSACB involved in phosphate import. Responsible for energy coupling to the transport system. In Cytophaga hutchinsonii (strain ATCC 33406 / DSM 1761 / CIP 103989 / NBRC 15051 / NCIMB 9469 / D465), this protein is Phosphate import ATP-binding protein PstB.